An 883-amino-acid polypeptide reads, in one-letter code: Ankyrin repeat and SAM domain-containing protein 6 (883 aa).

10 ANK repeats span residues 8 to 37 (PGLQ…DPVA), 68 to 97 (AGNS…SVNS), 101 to 130 (YGWS…DVNA), 134 to 163 (LGAS…IVDH), 181 to 210 (LGIT…DPNH), 215 to 244 (VGWS…NPDH), 282 to 312 (KRRP…HVNL), 316 to 345 (DGAT…DMDK), 350 to 379 (HGWT…DVAL), and 383 to 414 (NGYT…QVNK). The segment at 30–50 (EPGADPVAGPEAGAEPAGPEA) is disordered. Disordered stretches follow at residues 414-439 (KDRG…IPVL), 490-522 (MRAP…RREK), 566-773 (SHTC…ITDE), and 852-883 (SFES…SSRR). Positions 566–576 (SHTCHNGKADP) are enriched in basic and acidic residues. Over residues 607 to 630 (PSISRSPASPASSGSFNHSPHSSG) the composition is skewed to low complexity. Gly residues predominate over residues 631 to 640 (GASGIGGMSR). A Phosphoserine modification is found at serine 649. The segment covering 649–661 (SGGSVDSVLSQIA) has biased composition (polar residues). 2 stretches are compositionally biased toward low complexity: residues 687 to 711 (SSSP…PSSS) and 720 to 737 (PPSG…TLTP). Serine 732 and serine 740 each carry phosphoserine. The segment covering 748 to 768 (SSVSSSSSHRQSKSSGGSSSG) has biased composition (low complexity). Positions 771-834 (TDEDELTGIL…LAAISELNAG (64 aa)) constitute an SAM domain. The span at 852-862 (SFESSASNTRA) shows a compositional bias: polar residues. A compositionally biased stretch (basic and acidic residues) spans 874–883 (RPEETVSSRR).

In terms of assembly, homooligomer. Interacts with NEK8. Central component of a complex containing at least ANKS6, INVS, NEK8 and NPHP3. ANKS6 may organize complex assembly by linking INVS and NPHP3 to NEK8 and INVS may target the complex to the proximal ciliary axoneme. Interacts (via SAM domain) with BICC1 (via KH domains) in an RNA-dependent manner. Interacts (via SAM domain) with ANKS3 (via SAM domain). Post-translationally, hydroxylated at Asn-129, most probably by HIF1AN. This hydroxylation results in decreased NEK8-binding. As to expression, expressed in kidney (at protein level).

It localises to the cell projection. The protein localises to the cilium. The protein resides in the cytoplasm. Its function is as follows. Required for renal function. The protein is Ankyrin repeat and SAM domain-containing protein 6 (Anks6) of Mus musculus (Mouse).